The following is a 1063-amino-acid chain: Exportin-1 (1063 aa).

Residues 43–109 enclose the Importin N-terminal domain; that stretch reads AQSILTTLKE…KKYVVSLIIK (67 aa). The tract at residues 1034 to 1063 is disordered; sequence AEEQSNKHQMQRNIPGMLNPHELPEDMQDE.

It belongs to the exportin family. As to quaternary structure, interacts with Clbn (via its N-terminus). Associates with the nuclear pore complex via interaction with mbo and Nup214. Interacts with target proteins containing NES sequences such as actin and dl. In terms of tissue distribution, high expression observed in the developing embryonic brain, hind gut and posterior spiracles shortly before dorsal closure; and in the ventral nerve cord, midgut and somatic musculature shortly after dorsal closure. Expression increases when the tissue is well developed.

It is found in the nucleus. The protein localises to the nucleus membrane. Functionally, receptor for the leucine-rich nuclear export signal (NES). Binds cooperatively to the NES on its target protein and to the small GTPase Ran in its active GTP-bound form. Involved in the export of dl, RpS2 and the pre-40S ribosome from the nucleus to the cytoplasm. Plays an important role in nuclear pore assembly by mediating nucleoporin condensation and biogenesis of annulate lamellae. Required for the function or maintenance of certain tissues such as brain and gut. This is Exportin-1 from Drosophila melanogaster (Fruit fly).